A 677-amino-acid chain; its full sequence is WD and tetratricopeptide repeats protein 1 (677 aa).

WD repeat units follow at residues 45–84 (GHSGCVNCLEWNEKGDLLASGSDDQHTIVWDPLHHKKLLS), 88–129 (GHTA…TIHM), 132–172 (DHTN…KHSE), 182–222 (GPMV…NHRK), and 265–305 (RLRV…RPYT). S352 bears the Phosphoserine mark. TPR repeat units lie at residues 361–394 (LERVKQQANEAFACQQWTQAIQLYSQAVQKAPHN) and 396–431 (MLYGNRAAAYMKRKWDGDHYDALRDCLKAISLNPCH). Positions 489–509 (EEKKAAGGGGGPVRLRSTSRK) are disordered. Residue S511 is modified to Phosphoserine. WD repeat units follow at residues 535-575 (NTTT…LVRV) and 578-617 (GDESIVNCLQPHPSYCFLATSGIDPVVRLWNPRPESEDLT). A disordered region spans residues 655-677 (SSGGAGASDDEDSAEGQVQCRPS).

It functions in the pathway protein modification; protein ubiquitination. May function as a substrate receptor for CUL4-DDB1 E3 ubiquitin-protein ligase complex. The polypeptide is WD and tetratricopeptide repeats protein 1 (Wdtc1) (Mus musculus (Mouse)).